The following is a 126-amino-acid chain: Fluoride-specific ion channel FluC (126 aa).

Transmembrane regions (helical) follow at residues 33 to 53 (LPLN…VFIV), 64 to 84 (YSLF…SFAL), and 96 to 116 (GALA…LIGG). Residues glycine 74 and threonine 77 each coordinate Na(+).

The protein belongs to the fluoride channel Fluc/FEX (TC 1.A.43) family.

The protein resides in the cell membrane. It carries out the reaction fluoride(in) = fluoride(out). With respect to regulation, na(+) is not transported, but it plays an essential structural role and its presence is essential for fluoride channel function. Fluoride-specific ion channel. Important for reducing fluoride concentration in the cell, thus reducing its toxicity. The chain is Fluoride-specific ion channel FluC from Nitrosopumilus maritimus (strain SCM1).